Here is a 205-residue protein sequence, read N- to C-terminus: Large ribosomal subunit protein bL25 (205 aa).

Residues 178–205 (FPETEPVEDEESAGEDAQGESEEKAAKE) are disordered. Positions 182–197 (EPVEDEESAGEDAQGE) are enriched in acidic residues.

This sequence belongs to the bacterial ribosomal protein bL25 family. CTC subfamily. As to quaternary structure, part of the 50S ribosomal subunit; part of the 5S rRNA/L5/L18/L25 subcomplex. Contacts the 5S rRNA. Binds to the 5S rRNA independently of L5 and L18.

In terms of biological role, this is one of the proteins that binds to the 5S RNA in the ribosome where it forms part of the central protuberance. This Cutibacterium acnes (strain DSM 16379 / KPA171202) (Propionibacterium acnes) protein is Large ribosomal subunit protein bL25.